The sequence spans 167 residues: Gametocyte-specific factor 1 (167 aa).

The residue at position 8 (Ser-8) is a Phosphoserine. CHHC U11-48K-type zinc fingers lie at residues 14 to 41 and 48 to 75; these read LLQC…RKNH and LATC…DDKS. Residues Cys-17, His-23, His-33, Cys-37, Cys-51, His-57, His-67, and Cys-71 each contribute to the Zn(2+) site.

It belongs to the UPF0224 (FAM112) family. Expressed abundantly in adult testis, at moderate levels in unfertilized eggs and ovaries and weakly in embryonic stem cells.

Its subcellular location is the cytoplasm. In terms of biological role, required for spermatogenesis and is involved in the suppression of retrotransposon transcription in male germ cells. The protein is Gametocyte-specific factor 1 of Mus musculus (Mouse).